The sequence spans 102 residues: Large ribosomal subunit protein bL21 (102 aa).

The protein belongs to the bacterial ribosomal protein bL21 family. As to quaternary structure, part of the 50S ribosomal subunit. Contacts protein L20.

Its function is as follows. This protein binds to 23S rRNA in the presence of protein L20. In Listeria monocytogenes serotype 4b (strain CLIP80459), this protein is Large ribosomal subunit protein bL21.